A 357-amino-acid chain; its full sequence is Chorismate synthase (357 aa).

R47 provides a ligand contact to NADP(+). Residues 123–125 (RAS), G281, 296–300 (KPTSS), and R324 each bind FMN.

This sequence belongs to the chorismate synthase family. Homotetramer. It depends on FMNH2 as a cofactor.

The enzyme catalyses 5-O-(1-carboxyvinyl)-3-phosphoshikimate = chorismate + phosphate. The protein operates within metabolic intermediate biosynthesis; chorismate biosynthesis; chorismate from D-erythrose 4-phosphate and phosphoenolpyruvate: step 7/7. In terms of biological role, catalyzes the anti-1,4-elimination of the C-3 phosphate and the C-6 proR hydrogen from 5-enolpyruvylshikimate-3-phosphate (EPSP) to yield chorismate, which is the branch point compound that serves as the starting substrate for the three terminal pathways of aromatic amino acid biosynthesis. This reaction introduces a second double bond into the aromatic ring system. The polypeptide is Chorismate synthase (Chlamydia trachomatis serovar L2 (strain ATCC VR-902B / DSM 19102 / 434/Bu)).